The primary structure comprises 664 residues: DNA mismatch repair protein MutL (664 aa).

The segment at 382–447 (RKAGQEQQLQ…YGEPAPSKQQ (66 aa)) is disordered. Positions 427–436 (RHTTSSNQSE) are enriched in polar residues.

It belongs to the DNA mismatch repair MutL/HexB family.

In terms of biological role, this protein is involved in the repair of mismatches in DNA. It is required for dam-dependent methyl-directed DNA mismatch repair. May act as a 'molecular matchmaker', a protein that promotes the formation of a stable complex between two or more DNA-binding proteins in an ATP-dependent manner without itself being part of a final effector complex. The polypeptide is DNA mismatch repair protein MutL (Vibrio vulnificus (strain YJ016)).